We begin with the raw amino-acid sequence, 154 residues long: Large ribosomal subunit protein uL22c (154 aa).

The protein belongs to the universal ribosomal protein uL22 family. In terms of assembly, part of the 50S ribosomal subunit.

The protein resides in the plastid. It localises to the chloroplast. In terms of biological role, this protein binds specifically to 23S rRNA. Its function is as follows. The globular domain of the protein is located near the polypeptide exit tunnel on the outside of the subunit, while an extended beta-hairpin is found that lines the wall of the exit tunnel in the center of the 70S ribosome. This is Large ribosomal subunit protein uL22c (rpl22) from Jasminum nudiflorum (Winter jasmine).